The primary structure comprises 161 residues: Nucleotide-binding protein lpg1167 (161 aa).

It belongs to the YajQ family.

Nucleotide-binding protein. In Legionella pneumophila subsp. pneumophila (strain Philadelphia 1 / ATCC 33152 / DSM 7513), this protein is Nucleotide-binding protein lpg1167.